The primary structure comprises 171 residues: ATP synthase subunit b (171 aa).

Residues 4 to 24 (IAFFVICVGFPSLIFASASIQ) traverse the membrane as a helical segment.

It belongs to the ATPase B chain family. F-type ATPases have 2 components, F(1) - the catalytic core - and F(0) - the membrane proton channel. F(1) has five subunits: alpha(3), beta(3), gamma(1), delta(1), epsilon(1). F(0) has three main subunits: a(1), b(2) and c(10-14). The alpha and beta chains form an alternating ring which encloses part of the gamma chain. F(1) is attached to F(0) by a central stalk formed by the gamma and epsilon chains, while a peripheral stalk is formed by the delta and b chains.

It is found in the cell inner membrane. Functionally, f(1)F(0) ATP synthase produces ATP from ADP in the presence of a proton or sodium gradient. F-type ATPases consist of two structural domains, F(1) containing the extramembraneous catalytic core and F(0) containing the membrane proton channel, linked together by a central stalk and a peripheral stalk. During catalysis, ATP synthesis in the catalytic domain of F(1) is coupled via a rotary mechanism of the central stalk subunits to proton translocation. In terms of biological role, component of the F(0) channel, it forms part of the peripheral stalk, linking F(1) to F(0). The chain is ATP synthase subunit b from Helicobacter hepaticus (strain ATCC 51449 / 3B1).